A 149-amino-acid polypeptide reads, in one-letter code: Arginine regulator (149 aa).

This sequence belongs to the ArgR family.

It is found in the cytoplasm. The protein operates within amino-acid degradation; L-arginine degradation via ADI pathway. Functionally, regulates the transcription of the arc operon, involved in arginine catabolism. The polypeptide is Arginine regulator (argR1) (Bacillus thuringiensis subsp. konkukian (strain 97-27)).